A 202-amino-acid chain; its full sequence is UPF0301 protein Meso_0753 (202 aa).

This sequence belongs to the UPF0301 (AlgH) family.

The polypeptide is UPF0301 protein Meso_0753 (Chelativorans sp. (strain BNC1)).